The primary structure comprises 163 residues: ATP synthase subunit b 1 (163 aa).

A helical membrane pass occupies residues Phe-5–Leu-25.

This sequence belongs to the ATPase B chain family. In terms of assembly, F-type ATPases have 2 components, F(1) - the catalytic core - and F(0) - the membrane proton channel. F(1) has five subunits: alpha(3), beta(3), gamma(1), delta(1), epsilon(1). F(0) has three main subunits: a(1), b(2) and c(10-14). The alpha and beta chains form an alternating ring which encloses part of the gamma chain. F(1) is attached to F(0) by a central stalk formed by the gamma and epsilon chains, while a peripheral stalk is formed by the delta and b chains.

The protein resides in the cell inner membrane. Its function is as follows. F(1)F(0) ATP synthase produces ATP from ADP in the presence of a proton or sodium gradient. F-type ATPases consist of two structural domains, F(1) containing the extramembraneous catalytic core and F(0) containing the membrane proton channel, linked together by a central stalk and a peripheral stalk. During catalysis, ATP synthesis in the catalytic domain of F(1) is coupled via a rotary mechanism of the central stalk subunits to proton translocation. Functionally, component of the F(0) channel, it forms part of the peripheral stalk, linking F(1) to F(0). The protein is ATP synthase subunit b 1 of Rhizobium leguminosarum bv. trifolii (strain WSM2304).